The chain runs to 241 residues: Octanoyltransferase (241 aa).

Residues 50–238 enclose the BPL/LPL catalytic domain; it reads KIAHEQVWLL…AFEQIFGPTI (189 aa). Substrate is bound by residues 89–96, 169–171, and 182–184; these read RGGEFTYH, AIG, and GIS. Catalysis depends on cysteine 200, which acts as the Acyl-thioester intermediate.

This sequence belongs to the LipB family.

The protein resides in the cytoplasm. The catalysed reaction is octanoyl-[ACP] + L-lysyl-[protein] = N(6)-octanoyl-L-lysyl-[protein] + holo-[ACP] + H(+). It participates in protein modification; protein lipoylation via endogenous pathway; protein N(6)-(lipoyl)lysine from octanoyl-[acyl-carrier-protein]: step 1/2. Its function is as follows. Catalyzes the transfer of endogenously produced octanoic acid from octanoyl-acyl-carrier-protein onto the lipoyl domains of lipoate-dependent enzymes. Lipoyl-ACP can also act as a substrate although octanoyl-ACP is likely to be the physiological substrate. The protein is Octanoyltransferase of Bartonella bacilliformis (strain ATCC 35685 / KC583 / Herrer 020/F12,63).